The primary structure comprises 394 residues: Fructose-bisphosphate aldolase, chloroplastic (394 aa).

The transit peptide at 1–46 directs the protein to the chloroplast; it reads MASASLLKTSPVLDNPEFLKGQTLRIPSVAGVRFTPSGSSSLTVRA. Arginine 93 and lysine 183 together coordinate substrate. The active-site Proton acceptor is the glutamate 223. The active-site Schiff-base intermediate with dihydroxyacetone-P is the lysine 265.

This sequence belongs to the class I fructose-bisphosphate aldolase family.

The protein localises to the plastid. Its subcellular location is the chloroplast. The catalysed reaction is beta-D-fructose 1,6-bisphosphate = D-glyceraldehyde 3-phosphate + dihydroxyacetone phosphate. Its pathway is carbohydrate degradation; glycolysis; D-glyceraldehyde 3-phosphate and glycerone phosphate from D-glucose: step 4/4. This chain is Fructose-bisphosphate aldolase, chloroplastic, found in Spinacia oleracea (Spinach).